Here is a 111-residue protein sequence, read N- to C-terminus: Class I hydrophobin 10 (111 aa).

The signal sequence occupies residues 1–17 (MLFNTFVVTALASLAAA). Disulfide bonds link Cys30/Cys90, Cys37/Cys84, Cys38/Cys71, and Cys91/Cys104.

The protein belongs to the fungal hydrophobin family. Self-assembles to form functional amyloid fibrils called rodlets. Self-assembly into fibrillar rodlets occurs spontaneously at hydrophobic:hydrophilic interfaces and the rodlets further associate laterally to form amphipathic monolayers.

It localises to the secreted. The protein localises to the cell wall. Its function is as follows. Aerial growth, conidiation, and dispersal of filamentous fungi in the environment rely upon a capability of their secreting small amphipathic proteins called hydrophobins (HPBs) with low sequence identity. Class I can self-assemble into an outermost layer of rodlet bundles on aerial cell surfaces, conferring cellular hydrophobicity that supports fungal growth, development and dispersal; whereas Class II form highly ordered films at water-air interfaces through intermolecular interactions but contribute nothing to the rodlet structure. The protein is Class I hydrophobin 10 of Pleurotus ostreatus (strain PC15) (Oyster mushroom).